A 730-amino-acid chain; its full sequence is Regulatory factor X 4 (730 aa).

Positions 30 to 41 (YSSHTSLGNISN) are enriched in polar residues. The disordered stretch occupies residues 30–59 (YSSHTSLGNISNDETDEEKENRASKPHSTP). Positions 61 to 136 (TLQWLGENYE…YHYYGIAVKE (76 aa)) form a DNA-binding region, RFX-type winged-helix. Residues 500–532 (EPAISTPSPVPFSPAASSSSVEIPSATSPVSNQ) form a disordered region. Residues 512 to 528 (SPAASSSSVEIPSATSP) are compositionally biased toward low complexity.

It belongs to the RFX family.

The protein localises to the nucleus. Functionally, required for neural tube ciliogenesis during embryogenesis. This chain is Regulatory factor X 4, found in Xenopus laevis (African clawed frog).